Reading from the N-terminus, the 1083-residue chain is Kinesin-like protein KIN-14R (1083 aa).

Residues 264-418 (HDKYEKKIAE…NHIQETKGNI (155 aa)) adopt a coiled-coil conformation. Positions 417–739 (NIRVFCRCRP…LNFATRVRGV (323 aa)) constitute a Kinesin motor domain. 500 to 507 (GQTGTGKT) provides a ligand contact to ATP. 2 coiled-coil regions span residues 746-876 (KQVD…SEGS) and 905-947 (IKEL…MATT). The tract at residues 967–1083 (EDNFGNENME…RDSKKKIWSR (117 aa)) is disordered. Over residues 971 to 985 (GNENMESNTNILRTS) the composition is skewed to polar residues. Over residues 1020-1032 (PQMKEKRIRKSDP) the composition is skewed to basic and acidic residues. The segment covering 1044–1054 (RTASGSSSQVP) has biased composition (polar residues). A compositionally biased stretch (basic and acidic residues) spans 1062–1083 (KREQQEVPVVKERDSKKKIWSR).

It belongs to the TRAFAC class myosin-kinesin ATPase superfamily. Kinesin family. KIN-14 subfamily.

The protein is Kinesin-like protein KIN-14R of Arabidopsis thaliana (Mouse-ear cress).